A 146-amino-acid polypeptide reads, in one-letter code: Large ribosomal subunit protein uL15 (146 aa).

Positions 1-13 (MKLHELQPAEGSR) are enriched in basic and acidic residues. Residues 1-58 (MKLHELQPAEGSRKVRNRVGRGIGSGNGKTAGKGHKGQKARSGGGVRPGFEGGQNPLY) are disordered. Gly residues-rich tracts occupy residues 21–31 (RGIGSGNGKTA) and 42–52 (SGGGVRPGFEG).

This sequence belongs to the universal ribosomal protein uL15 family. Part of the 50S ribosomal subunit.

Binds to the 23S rRNA. This is Large ribosomal subunit protein uL15 from Shouchella clausii (strain KSM-K16) (Alkalihalobacillus clausii).